The chain runs to 226 residues: Protein YOP1 homolog (226 aa).

The disordered stretch occupies residues 1-25; that stretch reads MRMSKLYKNKEKENEKPSNEPPIKQ. Residues 1-72 lie on the Cytoplasmic side of the membrane; that stretch reads MRMSKLYKNK…IEFGYKLGIK (72 aa). Residues 8-18 are compositionally biased toward basic and acidic residues; sequence KNKEKENEKPS. The chain crosses the membrane as a helical span at residues 73–92; it reads PSYIVVFGGSALFISLVLGW. Residues 93–94 lie on the Lumenal side of the membrane; sequence GA. A helical membrane pass occupies residues 95–113; the sequence is ALICNLVGFAYPAYQSFKA. Residues 114-123 lie on the Cytoplasmic side of the membrane; it reads VESQGHAETK. The helical transmembrane segment at 124-140 threads the bilayer; sequence LWLTYWVVFSLFFFIEY. Residues 141-143 are Lumenal-facing; that stretch reads LID. The helical transmembrane segment at 144-162 threads the bilayer; that stretch reads IILFWIPFYYVIKLLFLLY. The Cytoplasmic segment spans residues 163–226; sequence LYMPQVRGAE…VQEGVRRRNV (64 aa).

It belongs to the DP1 family. In terms of assembly, may form oligomers.

It localises to the endoplasmic reticulum membrane. Its function is as follows. Required to generate and maintain the structure of the tubular endoplasmic reticulum network and the digestive (food) vacuole. Induces high curvature in membranes and causes membrane tubule formation. In Plasmodium berghei (strain Anka), this protein is Protein YOP1 homolog.